Here is a 512-residue protein sequence, read N- to C-terminus: MLNDKAIRQSKIIYWSSGIVSICGIIFEVLFGALGSYILGDGVKQYTLTISLFLTGMGIGASLSEKFMRNLIIKFVWIEFCVALIGGFSSFIMFGITAFAPAGTDAFYLYSITLIIGALTGVELPILIRKANEIGVTLNKSTARVLFSDYAGGLIGGVLFVFLFRPYFGMVKTAFLVGLINLTVALIVLWLFRKEIRHFIVHAVIGGVIGVLLIAGLFFGEEMAFNFEQKLYQDPIIHMEESSYQKITVTQDEKDIRLYLDGSLQFSSVDEHRYHEVLVHPAMANVETPENVLILGGGDGIAAKEVLKYQDVKQVTLVDLDPAVVELANENRHLLEINEGALMDEKVEVKNMDAFQFLEDTSEWYDVILVDLPDPNNESLNKLYTKEFYSLVRNHLKPEGTLMVQATSPVFAREVYWTISETISSTNLNTENLHVDVPSFGNWGFVMASREEIDLDIMEIPVSTRFLTDDMMPALTAFGKDEDQQIPNFELKANTLIDPHLIQIYEKAWENY.

Transmembrane regions (helical) follow at residues 19-39, 48-68, 76-96, 108-128, 151-171, 172-192, and 199-219; these read IVSI…SYIL, LTIS…EKFM, VWIE…MFGI, YLYS…PILI, AGGL…FGMV, KTAF…LWLF, and FIVH…GLFF. Positions 215–450 constitute a PABS domain; the sequence is AGLFFGEEMA…GNWGFVMASR (236 aa). Residues 217-457 are spermidine synthase; sequence LFFGEEMAFN…ASREEIDLDI (241 aa). S-methyl-5'-thioadenosine is bound at residue glutamine 245. The spermidine site is built by histidine 275 and aspartate 299. S-methyl-5'-thioadenosine-binding positions include aspartate 319 and 353–354; that span reads DA. Residue aspartate 371 is the Proton acceptor of the active site.

This sequence belongs to the spermidine/spermine synthase family. As to quaternary structure, homodimer or homotetramer.

The protein resides in the cell membrane. The enzyme catalyses S-adenosyl 3-(methylsulfanyl)propylamine + putrescine = S-methyl-5'-thioadenosine + spermidine + H(+). The protein operates within amine and polyamine biosynthesis; spermidine biosynthesis; spermidine from putrescine: step 1/1. Functionally, catalyzes the irreversible transfer of a propylamine group from the amino donor S-adenosylmethioninamine (decarboxy-AdoMet) to putrescine (1,4-diaminobutane) to yield spermidine. The chain is Polyamine aminopropyltransferase from Oceanobacillus iheyensis (strain DSM 14371 / CIP 107618 / JCM 11309 / KCTC 3954 / HTE831).